A 206-amino-acid chain; its full sequence is Glycerol-3-phosphate acyltransferase (206 aa).

A run of 5 helical transmembrane segments spans residues 3-23, 51-71, 83-103, 113-133, and 162-182; these read LGWLLVIGSYLLGSVSFSYII, VGPAVTVLLLDILKGVIAVVV, FAAAAGIAAIIGHNWPIYYGF, IGVLASLVPLAAVLAGVIAIG, and WFGYPVAYIYLTIIVAILSMW.

This sequence belongs to the PlsY family. In terms of assembly, probably interacts with PlsX.

Its subcellular location is the cell membrane. The catalysed reaction is an acyl phosphate + sn-glycerol 3-phosphate = a 1-acyl-sn-glycero-3-phosphate + phosphate. It participates in lipid metabolism; phospholipid metabolism. In terms of biological role, catalyzes the transfer of an acyl group from acyl-phosphate (acyl-PO(4)) to glycerol-3-phosphate (G3P) to form lysophosphatidic acid (LPA). This enzyme utilizes acyl-phosphate as fatty acyl donor, but not acyl-CoA or acyl-ACP. The chain is Glycerol-3-phosphate acyltransferase from Halalkalibacterium halodurans (strain ATCC BAA-125 / DSM 18197 / FERM 7344 / JCM 9153 / C-125) (Bacillus halodurans).